A 226-amino-acid chain; its full sequence is Adenylate kinase (226 aa).

Position 12 to 17 (G12 to T17) interacts with ATP. Positions E32–V61 are NMP. AMP is bound by residues S33, R38, D59 to V61, G87 to R90, and Q94. Positions G128–D171 are LID. Position 129 (R129) interacts with ATP. AMP contacts are provided by R168 and R180. A213 is an ATP binding site.

This sequence belongs to the adenylate kinase family. In terms of assembly, monomer.

It is found in the cytoplasm. The enzyme catalyses AMP + ATP = 2 ADP. Its pathway is purine metabolism; AMP biosynthesis via salvage pathway; AMP from ADP: step 1/1. Functionally, catalyzes the reversible transfer of the terminal phosphate group between ATP and AMP. Plays an important role in cellular energy homeostasis and in adenine nucleotide metabolism. This Desulfotalea psychrophila (strain LSv54 / DSM 12343) protein is Adenylate kinase.